Here is a 119-residue protein sequence, read N- to C-terminus: Large ribosomal subunit protein uL22 (119 aa).

Belongs to the universal ribosomal protein uL22 family. As to quaternary structure, part of the 50S ribosomal subunit.

Its function is as follows. This protein binds specifically to 23S rRNA; its binding is stimulated by other ribosomal proteins, e.g. L4, L17, and L20. It is important during the early stages of 50S assembly. It makes multiple contacts with different domains of the 23S rRNA in the assembled 50S subunit and ribosome. Functionally, the globular domain of the protein is located near the polypeptide exit tunnel on the outside of the subunit, while an extended beta-hairpin is found that lines the wall of the exit tunnel in the center of the 70S ribosome. The protein is Large ribosomal subunit protein uL22 of Bifidobacterium animalis subsp. lactis (strain AD011).